The chain runs to 495 residues: Glutamate--tRNA ligase (495 aa).

The 'HIGH' region signature appears at 14 to 24; that stretch reads PSPTGYLHIGS. The 'KMSKS' region signature appears at 255–259; that stretch reads KLSKR. Position 258 (Lys-258) interacts with ATP.

It belongs to the class-I aminoacyl-tRNA synthetase family. Glutamate--tRNA ligase type 1 subfamily. In terms of assembly, monomer.

It is found in the cytoplasm. The enzyme catalyses tRNA(Glu) + L-glutamate + ATP = L-glutamyl-tRNA(Glu) + AMP + diphosphate. Its function is as follows. Catalyzes the attachment of glutamate to tRNA(Glu) in a two-step reaction: glutamate is first activated by ATP to form Glu-AMP and then transferred to the acceptor end of tRNA(Glu). This Herpetosiphon aurantiacus (strain ATCC 23779 / DSM 785 / 114-95) protein is Glutamate--tRNA ligase.